The following is a 284-amino-acid chain: Interferon antagonist OPG040 (284 aa).

ANK repeat units follow at residues 29–58, 60–89, 93–122, 127–157, 159–188, and 193–222; these read HGHSALYYAIADNNVRLVCTLLNAGALKNL, ENEFPLHQAATLEDTKIVKILLFSGLDDSQ, KGNTALYYAVDSGNMQTVKLFVKKNWRLMF, GWKTSFYHAVMLNDVSIVSYFLSEIPSTFDL, ILLSCIHITIKNGHVDMMILLLDYMTSTNT, and LFIPDIKLAIDNKDIEMLQALFKYDINIYS.

It belongs to the orthopoxvirus OPG039 family.

Its subcellular location is the host cytoplasm. The protein resides in the host nucleus. Functionally, inhibits antiviral activity induced by type I interferons. Does not block signal transduction of IFN, but is important to counter the host antiviral state induced by a pre-treatment with IFN. Plays a role in the inhibition of host NF-kappa-B activation by preventing the acetylation of the RELA/p65 subunit of NF-kappaB. The polypeptide is Interferon antagonist OPG040 (OPG039) (Bos taurus (Bovine)).